The following is a 591-amino-acid chain: Ferric-chelate reductase 1 (591 aa).

A helical transmembrane segment spans residues 6 to 26 (FTVSAFILLLHVSFVANYPSG). Positions 13-179 (LLLHVSFVAN…FTTPEATIAP (167 aa)) constitute a Reelin domain. N-linked (GlcNAc...) asparagine glycans are attached at residues Asn50, Asn85, Asn308, Asn321, and Asn353. Residues 216 to 331 (ERACVLLSFT…ASYYIFVADG (116 aa)) enclose the DOMON domain. Residues 335–533 (DGRIHKHSQQ…VGTEIILEIH (199 aa)) form the Cytochrome b561 domain. Residues 372–392 (VHGALMFVAWMTTVSVGVLIA) traverse the membrane as a helical segment. His373 and His413 together coordinate heme b. 2 helical membrane-spanning segments follow: residues 416-436 (LMLTTSALTFIAFLLPFIYRG) and 445-465 (HPYLGFIVMVLAVLQLLLAAF). Positions 445 and 481 each coordinate heme b. The next 3 membrane-spanning stretches (helical) occupy residues 490–510 (IIAVAAMFLGMDLPGLNLPGP), 514–534 (YAMIGFVAWHVGTEIILEIHA), and 568–588 (VVLAIYVCGNLTFLTMFLSAI).

It belongs to the FRRS1 family. Heme b serves as cofactor.

The protein resides in the membrane. Functionally, ferric-chelate reductases reduce Fe(3+) to Fe(2+) before its transport from the endosome to the cytoplasm. The protein is Ferric-chelate reductase 1 (FRRS1) of Bos taurus (Bovine).